Reading from the N-terminus, the 330-residue chain is Taste receptor type 2 member 117 (330 aa).

Residues 1–16 are Extracellular-facing; sequence MKHFWKILSVISQSTL. The helical transmembrane segment at 17–37 threads the bilayer; it reads SVILIVELVIGIIGNGFMVLV. The Cytoplasmic portion of the chain corresponds to 38–53; it reads HCMDWVKKKKMSLVNQ. The chain crosses the membrane as a helical span at residues 54–74; it reads ILTALSISRIFQLCLLFISLV. Residues 75 to 95 are Extracellular-facing; the sequence is INFSYTDLTTSSRMIQVMYNA. A glycan (N-linked (GlcNAc...) asparagine) is linked at Asn76. Residues 96 to 116 form a helical membrane-spanning segment; that stretch reads WILANHFSIWIATCLTVLYFL. Over 117–135 the chain is Cytoplasmic; sequence KIANFSNSFFLYLKWRVEK. The chain crosses the membrane as a helical span at residues 136–156; it reads VVSVTLLVSLLLLILNILLTN. The Extracellular portion of the chain corresponds to 157–190; it reads LETDMWTNEYQRNISCSFSSHYYAKCHRQVLRLH. Residue Asn169 is glycosylated (N-linked (GlcNAc...) asparagine). A helical transmembrane segment spans residues 191–211; the sequence is IIFLSVPVVLSLSTFLLLIFS. Over 212–239 the chain is Cytoplasmic; the sequence is LWTHHKRMQQHVQGGRDARTTAHFKALQ. The helical transmembrane segment at 240 to 260 threads the bilayer; that stretch reads TVIAFFLLYSIFILSVLIQIW. Over 261–269 the chain is Extracellular; it reads KYELLKKNL. A helical transmembrane segment spans residues 270-290; sequence FVVFCEVVYIAFPTFHSYILI. At 291-330 the chain is on the cytoplasmic side; the sequence is VGDMKLRQACLPLCIIAAEIQTTLCRNFRSLKYFRLCCIF.

This sequence belongs to the G-protein coupled receptor T2R family.

The protein resides in the membrane. Putative taste receptor which may play a role in the perception of bitterness. The sequence is that of Taste receptor type 2 member 117 from Mus musculus (Mouse).